The following is a 190-amino-acid chain: Superoxide dismutase [Cu-Zn] (190 aa).

The first 23 residues, 1-23 (MKLTNLALAFTLFGASAVAFAHA), serve as a signal peptide directing secretion. Residues His83, His85, and His108 each coordinate Cu cation. An intrachain disulfide couples Cys90 to Cys186. Zn(2+)-binding residues include His108, His117, His126, and Asp129. Residues 162-181 (MIHEGGDNHSDHPAPLGGGG) form a disordered region. His164 lines the Cu cation pocket.

This sequence belongs to the Cu-Zn superoxide dismutase family. Homodimer. Cu cation is required as a cofactor. Zn(2+) serves as cofactor.

Its subcellular location is the periplasm. The enzyme catalyses 2 superoxide + 2 H(+) = H2O2 + O2. In terms of biological role, destroys radicals which are normally produced within the cells and which are toxic to biological systems. The polypeptide is Superoxide dismutase [Cu-Zn] (sodC) (Actinobacillus pleuropneumoniae (Haemophilus pleuropneumoniae)).